We begin with the raw amino-acid sequence, 336 residues long: Glycerol-3-phosphate dehydrogenase [NAD(P)+] (336 aa).

5 residues coordinate NADPH: S14, W15, R35, R36, and K109. Positions 109 and 139 each coordinate sn-glycerol 3-phosphate. A143 is a binding site for NADPH. Sn-glycerol 3-phosphate-binding residues include K194, D247, S257, R258, and N259. K194 serves as the catalytic Proton acceptor. R258 contributes to the NADPH binding site. Residue E284 coordinates NADPH.

It belongs to the NAD-dependent glycerol-3-phosphate dehydrogenase family.

It localises to the cytoplasm. The catalysed reaction is sn-glycerol 3-phosphate + NAD(+) = dihydroxyacetone phosphate + NADH + H(+). It carries out the reaction sn-glycerol 3-phosphate + NADP(+) = dihydroxyacetone phosphate + NADPH + H(+). Its pathway is membrane lipid metabolism; glycerophospholipid metabolism. In terms of biological role, catalyzes the reduction of the glycolytic intermediate dihydroxyacetone phosphate (DHAP) to sn-glycerol 3-phosphate (G3P), the key precursor for phospholipid synthesis. This is Glycerol-3-phosphate dehydrogenase [NAD(P)+] from Streptomyces griseus subsp. griseus (strain JCM 4626 / CBS 651.72 / NBRC 13350 / KCC S-0626 / ISP 5235).